A 98-amino-acid polypeptide reads, in one-letter code: NADH-ubiquinone oxidoreductase chain 4L (98 aa).

3 consecutive transmembrane segments (helical) span residues 1–21 (MTTIYLNLILAFTLALSGVLI), 26–46 (LLSTLLCLEGMMLSLFILMAL), and 59–79 (APLILLVFSACEAGVGLALLV).

It belongs to the complex I subunit 4L family. In terms of assembly, core subunit of respiratory chain NADH dehydrogenase (Complex I) which is composed of 45 different subunits.

Its subcellular location is the mitochondrion inner membrane. The enzyme catalyses a ubiquinone + NADH + 5 H(+)(in) = a ubiquinol + NAD(+) + 4 H(+)(out). Functionally, core subunit of the mitochondrial membrane respiratory chain NADH dehydrogenase (Complex I) which catalyzes electron transfer from NADH through the respiratory chain, using ubiquinone as an electron acceptor. Part of the enzyme membrane arm which is embedded in the lipid bilayer and involved in proton translocation. The polypeptide is NADH-ubiquinone oxidoreductase chain 4L (MT-ND4L) (Rhyncholestes raphanurus (Chilean shrew opossum)).